The following is a 40-amino-acid chain: Alpha-conotoxin-like Qc1.4b (40 aa).

Residues 1–19 constitute a propeptide that is removed on maturation; sequence SDGRNTAANDKASDLMALR. 2 disulfide bridges follow: Cys-22/Cys-28 and Cys-23/Cys-36. A lacks the Ser-Xaa-Pro motif that is crucial for potent interaction with nAChR region spans residues 24–26; sequence PNP. Cysteine amide is present on Cys-36. Residues 37 to 40 constitute a propeptide that is removed on maturation; sequence GGGR.

It belongs to the conotoxin A superfamily. Expressed by the venom duct.

The protein localises to the secreted. In terms of biological role, alpha-conotoxins act on postsynaptic membranes, they bind to the nicotinic acetylcholine receptors (nAChR) and thus inhibit them. Has possibly a distinct nAChR binding mode from other alpha-conotoxins, due to a different three residue motif (lacks the Ser-Xaa-Pro motif). This Conus quercinus (Oak cone) protein is Alpha-conotoxin-like Qc1.4b.